A 343-amino-acid polypeptide reads, in one-letter code: Dihydroorotate dehydrogenase (quinone) (343 aa).

FMN contacts are provided by residues 58–62 (AGYDK) and S82. K62 is a binding site for substrate. 107–111 (NRMGF) lines the substrate pocket. 2 residues coordinate FMN: N136 and N167. A substrate-binding site is contributed by N167. The active-site Nucleophile is the S170. N172 contacts substrate. Positions 206 and 234 each coordinate FMN. 235–236 (NT) serves as a coordination point for substrate. Residues G256, G285, and 306–307 (YS) contribute to the FMN site.

Belongs to the dihydroorotate dehydrogenase family. Type 2 subfamily. Monomer. FMN is required as a cofactor.

It is found in the cell membrane. It carries out the reaction (S)-dihydroorotate + a quinone = orotate + a quinol. It participates in pyrimidine metabolism; UMP biosynthesis via de novo pathway; orotate from (S)-dihydroorotate (quinone route): step 1/1. Catalyzes the conversion of dihydroorotate to orotate with quinone as electron acceptor. The polypeptide is Dihydroorotate dehydrogenase (quinone) (Erythrobacter litoralis (strain HTCC2594)).